A 920-amino-acid polypeptide reads, in one-letter code: Isoleucine--tRNA ligase (920 aa).

The short motif at 58-68 (PYANGHLHLGH) is the 'HIGH' region element. Glu569 serves as a coordination point for L-isoleucyl-5'-AMP. A 'KMSKS' region motif is present at residues 610–614 (KMSKS). Lys613 is a binding site for ATP. Residues Cys895, Cys898, Cys910, and Cys913 each contribute to the Zn(2+) site.

The protein belongs to the class-I aminoacyl-tRNA synthetase family. IleS type 1 subfamily. Monomer. Zn(2+) is required as a cofactor.

It localises to the cytoplasm. It carries out the reaction tRNA(Ile) + L-isoleucine + ATP = L-isoleucyl-tRNA(Ile) + AMP + diphosphate. Catalyzes the attachment of isoleucine to tRNA(Ile). As IleRS can inadvertently accommodate and process structurally similar amino acids such as valine, to avoid such errors it has two additional distinct tRNA(Ile)-dependent editing activities. One activity is designated as 'pretransfer' editing and involves the hydrolysis of activated Val-AMP. The other activity is designated 'posttransfer' editing and involves deacylation of mischarged Val-tRNA(Ile). This Helicobacter pylori (strain P12) protein is Isoleucine--tRNA ligase.